We begin with the raw amino-acid sequence, 378 residues long: Erythronate-4-phosphate dehydrogenase (378 aa).

2 residues coordinate substrate: Ser-45 and Thr-66. Positions 146 and 175 each coordinate NAD(+). Residue Arg-208 is part of the active site. Asp-232 contributes to the NAD(+) binding site. Glu-237 is an active-site residue. His-254 functions as the Proton donor in the catalytic mechanism. An NAD(+)-binding site is contributed by Gly-257. Tyr-258 is a binding site for substrate.

The protein belongs to the D-isomer specific 2-hydroxyacid dehydrogenase family. PdxB subfamily. In terms of assembly, homodimer.

The protein localises to the cytoplasm. The catalysed reaction is 4-phospho-D-erythronate + NAD(+) = (R)-3-hydroxy-2-oxo-4-phosphooxybutanoate + NADH + H(+). It participates in cofactor biosynthesis; pyridoxine 5'-phosphate biosynthesis; pyridoxine 5'-phosphate from D-erythrose 4-phosphate: step 2/5. In terms of biological role, catalyzes the oxidation of erythronate-4-phosphate to 3-hydroxy-2-oxo-4-phosphonooxybutanoate. In Salmonella paratyphi A (strain ATCC 9150 / SARB42), this protein is Erythronate-4-phosphate dehydrogenase.